The primary structure comprises 1854 residues: Protein virilizer (1854 aa).

A Phosphoserine modification is found at S186. Composition is skewed to basic and acidic residues over residues 202–214 and 236–259; these read YHQHAEEQEQREM and THSESNDREYIRCSRDKGSRDWSR. Disordered regions lie at residues 202 to 361, 777 to 821, 1570 to 1589, 1720 to 1788, and 1804 to 1854; these read YHQH…EIIG, NPEE…GKPV, TSTETPPEAEGEANPSASSC, VRGR…NRGS, and IGSP…SYLR. A phosphoserine mark is found at S258, S260, and S276. The segment covering 275–285 has biased composition (basic and acidic residues); that stretch reads RSRSVVDEHKW. Phosphothreonine is present on T288. A Phosphoserine modification is found at S295. The residue at position 297 (T297) is a Phosphothreonine. Phosphoserine occurs at positions 301 and 312. Basic and acidic residues-rich tracts occupy residues 325–343 and 777–796; these read HSSESLHRGERDRDDEDRS and NPEEKEEKAEKSDAEDKAME. Residues 779–808 adopt a coiled-coil conformation; the sequence is EEKEEKAEKSDAEDKAMEVENEAVEAGGEK. Low complexity-rich tracts occupy residues 1738–1748 and 1816–1838; these read SRPPNTSRPPS and SYRSASDSHFSSSDSHYSSPHYS.

Belongs to the vir family. As to quaternary structure, component of the WMM complex, a N6-methyltransferase complex composed of a catalytic subcomplex, named MAC, and of an associated subcomplex, named MACOM. The MAC subcomplex is composed of Ime4/Mettl3 and Mettl14. The MACOM subcomplex is composed of fl(2)d, Flacc/Xio, Hakai, vir, and, in some cases of nito. Part of a complex containing fl(2)d, Sxl and vir.

The protein localises to the nucleus. Its function is as follows. Associated component of the WMM complex, a complex that mediates N6-methyladenosine (m6A) methylation of mRNAs, a modification that plays a role in the efficiency of mRNA splicing and is required for sex determination. Required for sex determination and dosage compensation via Sxl alternative splicing: m6A methylation acts as a key regulator of Sxl pre-mRNA and promotes female-specific alternative splicing of Sxl, which determines female physiognomy. M6A methylation is also required for neuronal functions. Required for proper inclusion of regulated exons in Ubx transcripts, leading to isoforms Ia/b and IIa/b. The protein is Protein virilizer of Drosophila melanogaster (Fruit fly).